The sequence spans 239 residues: Sugar fermentation stimulation protein homolog (239 aa).

The protein belongs to the SfsA family.

The sequence is that of Sugar fermentation stimulation protein homolog from Maridesulfovibrio salexigens (strain ATCC 14822 / DSM 2638 / NCIMB 8403 / VKM B-1763) (Desulfovibrio salexigens).